A 363-amino-acid polypeptide reads, in one-letter code: Dihydroorotate dehydrogenase (quinone) (363 aa).

FMN is bound by residues 70 to 74 (AGFDK) and Thr94. Lys74 lines the substrate pocket. 119-123 (NRMGF) lines the substrate pocket. Asn147 and Asn180 together coordinate FMN. Asn180 lines the substrate pocket. The Nucleophile role is filled by Ser183. Asn185 serves as a coordination point for substrate. Residues Lys216 and Thr244 each contribute to the FMN site. 245-246 (NT) is a substrate binding site. FMN-binding positions include Gly270, Gly299, and 320 to 321 (YT).

It belongs to the dihydroorotate dehydrogenase family. Type 2 subfamily. As to quaternary structure, monomer. Requires FMN as cofactor.

It localises to the cell membrane. It carries out the reaction (S)-dihydroorotate + a quinone = orotate + a quinol. Its pathway is pyrimidine metabolism; UMP biosynthesis via de novo pathway; orotate from (S)-dihydroorotate (quinone route): step 1/1. Catalyzes the conversion of dihydroorotate to orotate with quinone as electron acceptor. This is Dihydroorotate dehydrogenase (quinone) from Corynebacterium diphtheriae (strain ATCC 700971 / NCTC 13129 / Biotype gravis).